A 27-amino-acid chain; its full sequence is Larval-specific very high density lipoprotein (27 aa).

In terms of assembly, homodimer. In terms of tissue distribution, hemolymph.

Its subcellular location is the secreted. It is found in the extracellular space. Its function is as follows. Unknown (it might play a role in lipid transport and/or storage protein metabolism during metamorphosis). This Apis mellifera (Honeybee) protein is Larval-specific very high density lipoprotein.